The primary structure comprises 267 residues: Tryptophan synthase alpha chain (267 aa).

Catalysis depends on proton acceptor residues E47 and D58.

This sequence belongs to the TrpA family. Tetramer of two alpha and two beta chains.

It catalyses the reaction (1S,2R)-1-C-(indol-3-yl)glycerol 3-phosphate + L-serine = D-glyceraldehyde 3-phosphate + L-tryptophan + H2O. It participates in amino-acid biosynthesis; L-tryptophan biosynthesis; L-tryptophan from chorismate: step 5/5. Functionally, the alpha subunit is responsible for the aldol cleavage of indoleglycerol phosphate to indole and glyceraldehyde 3-phosphate. The protein is Tryptophan synthase alpha chain of Chlorobium phaeovibrioides (strain DSM 265 / 1930) (Prosthecochloris vibrioformis (strain DSM 265)).